Here is a 412-residue protein sequence, read N- to C-terminus: Argininosuccinate synthase (412 aa).

Residues 10-18 and Ala-36 each bind ATP; that span reads AYSGGLDTS. Positions 87 and 92 each coordinate L-citrulline. Position 87 is a phosphotyrosine (Tyr-87). N6-acetyllysine is present on Lys-112. Tyr-113 carries the post-translational modification Phosphotyrosine. Residue 115–123 participates in ATP binding; the sequence is SHGATGKGN. 3 residues coordinate L-aspartate: Thr-119, Asn-123, and Asp-124. Asn-123 serves as a coordination point for L-citrulline. Arg-127 serves as a coordination point for L-citrulline. N6-acetyllysine; by CLOCK is present on residues Lys-165 and Lys-176. Residues Ser-180 and Ser-189 each contribute to the L-citrulline site. Phosphoserine is present on Ser-180. At Thr-219 the chain carries Phosphothreonine. Glu-270 and Tyr-282 together coordinate L-citrulline.

This sequence belongs to the argininosuccinate synthase family. Type 1 subfamily. In terms of assembly, homotetramer. Interacts with NMRAL1. Interacts with CLOCK; in a circadian manner. Forms tissue-specific complexes with ASL, SLC7A1, HSP90AA1 and nitric oxide synthase NOS1, NOS2 or NOS3; the complex regulates cell-autonomous L-arginine synthesis and citrulline recycling while channeling extracellular L-arginine to nitric oxide synthesis pathway. In terms of processing, acetylated by CLOCK in a circadian manner which negatively regulates its enzyme activity. Deacetylated by histone deacetylases. As to expression, expressed in adult liver.

The protein localises to the cytoplasm. Its subcellular location is the cytosol. The enzyme catalyses L-citrulline + L-aspartate + ATP = 2-(N(omega)-L-arginino)succinate + AMP + diphosphate + H(+). The protein operates within amino-acid biosynthesis; L-arginine biosynthesis; L-arginine from L-ornithine and carbamoyl phosphate: step 2/3. It participates in nitrogen metabolism; urea cycle; (N(omega)-L-arginino)succinate from L-aspartate and L-citrulline: step 1/1. Functionally, one of the enzymes of the urea cycle, the metabolic pathway transforming neurotoxic amonia produced by protein catabolism into inocuous urea in the liver of ureotelic animals. Catalyzes the formation of arginosuccinate from aspartate, citrulline and ATP and together with ASL it is responsible for the biosynthesis of arginine in most body tissues. The sequence is that of Argininosuccinate synthase from Homo sapiens (Human).